A 528-amino-acid chain; its full sequence is Nucleoporin ASM4 (528 aa).

The FG 1 repeat unit spans residues 2–3; it reads FG. Over residues 23–50 the composition is skewed to low complexity; the sequence is TTQMFQSQSQLQPQPQPQPQQQQQHLQF. Disordered regions lie at residues 23 to 64 and 88 to 144; these read TTQM…FGNS and IKNG…SMNA. Composition is skewed to polar residues over residues 51-64 and 97-108; these read NGSS…FGNS and QHGQGNNPSWVN. Residues 61–62 form an FG 2 repeat; the sequence is FG. The span at 110-125 shows a compositional bias: basic residues; sequence PKKRFTPHTVIRRKTT. The segment covering 127 to 141 has biased composition (low complexity); it reads QNSSSDINQNDDSSS. FG repeat units lie at residues 195–196, 274–275, and 291–292; these read FG. One can recognise an RRM Nup35-type domain in the interval 265–394; sequence SSSLSAIIVF…IPYSKNAVEQ (130 aa). Phosphoserine is present on residues Ser458 and Ser464. Residues 490–510 adopt a coiled-coil conformation; that stretch reads NLLRNLESKMRQQEAKYRNNE. An FG 6 repeat occupies 523-524; the sequence is FG.

As to quaternary structure, component of the nuclear pore complex (NPC). NPC constitutes the exclusive means of nucleocytoplasmic transport. NPCs allow the passive diffusion of ions and small molecules and the active, nuclear transport receptor-mediated bidirectional transport of macromolecules such as proteins, RNAs, ribonucleoparticles (RNPs), and ribosomal subunits across the nuclear envelope. Due to its 8-fold rotational symmetry, all subunits are present with 8 copies or multiples thereof. ASM4 may form a subcomplex with NUP53, NDC1, and NUP170. Post-translationally, phosphorylated by CDC28.

Its subcellular location is the nucleus. It localises to the nuclear pore complex. The protein localises to the nucleus membrane. Its function is as follows. Functions as a component of the nuclear pore complex (NPC). NPC components, collectively referred to as nucleoporins (NUPs), can play the role of both NPC structural components and of docking or interaction partners for transiently associated nuclear transport factors. Active directional transport is assured by both, a Phe-Gly (FG) repeat affinity gradient for these transport factors across the NPC and a transport cofactor concentration gradient across the nuclear envelope (GSP1 and GSP2 GTPases associated predominantly with GTP in the nucleus, with GDP in the cytoplasm). May have a mitosis control function. This Saccharomyces cerevisiae (strain ATCC 204508 / S288c) (Baker's yeast) protein is Nucleoporin ASM4 (ASM4).